Consider the following 168-residue polypeptide: Sec-independent protein translocase protein TatB (168 aa).

Residues 1-21 (MIDLGISKLALIGAVALIVIG) form a helical membrane-spanning segment.

This sequence belongs to the TatB family. In terms of assembly, the Tat system comprises two distinct complexes: a TatABC complex, containing multiple copies of TatA, TatB and TatC subunits, and a separate TatA complex, containing only TatA subunits. Substrates initially bind to the TatABC complex, which probably triggers association of the separate TatA complex to form the active translocon.

It is found in the cell inner membrane. In terms of biological role, part of the twin-arginine translocation (Tat) system that transports large folded proteins containing a characteristic twin-arginine motif in their signal peptide across membranes. Together with TatC, TatB is part of a receptor directly interacting with Tat signal peptides. TatB may form an oligomeric binding site that transiently accommodates folded Tat precursor proteins before their translocation. The polypeptide is Sec-independent protein translocase protein TatB (Cupriavidus pinatubonensis (strain JMP 134 / LMG 1197) (Cupriavidus necator (strain JMP 134))).